The primary structure comprises 344 residues: Phenylalanine--tRNA ligase alpha subunit (344 aa).

Glutamate 257 contacts Mg(2+).

It belongs to the class-II aminoacyl-tRNA synthetase family. Phe-tRNA synthetase alpha subunit type 1 subfamily. In terms of assembly, tetramer of two alpha and two beta subunits. Requires Mg(2+) as cofactor.

It is found in the cytoplasm. The enzyme catalyses tRNA(Phe) + L-phenylalanine + ATP = L-phenylalanyl-tRNA(Phe) + AMP + diphosphate + H(+). The protein is Phenylalanine--tRNA ligase alpha subunit of Chlorobium chlorochromatii (strain CaD3).